We begin with the raw amino-acid sequence, 138 residues long: Large ribosomal subunit protein bL19 (138 aa).

It belongs to the bacterial ribosomal protein bL19 family.

In terms of biological role, this protein is located at the 30S-50S ribosomal subunit interface and may play a role in the structure and function of the aminoacyl-tRNA binding site. In Rickettsia canadensis (strain McKiel), this protein is Large ribosomal subunit protein bL19.